Reading from the N-terminus, the 504-residue chain is Beta-xylosidase (504 aa).

The active-site Proton donor is Glu160. The active-site Nucleophile is the Glu280.

Belongs to the glycosyl hydrolase 39 family.

The catalysed reaction is Hydrolysis of (1-&gt;4)-beta-D-xylans, to remove successive D-xylose residues from the non-reducing termini.. The polypeptide is Beta-xylosidase (xynB) (Geobacillus stearothermophilus (Bacillus stearothermophilus)).